The following is a 339-amino-acid chain: Pleckstrin homology domain protein opy1 (339 aa).

The 95-residue stretch at 25 to 119 (RVLKSGWLIK…WVHVLRSTTG (95 aa)) folds into the PH 1 domain. Over residues 141–167 (ESEPNVQISDTDFDNISTEPRNQTTSP) the composition is skewed to polar residues. Positions 141-170 (ESEPNVQISDTDFDNISTEPRNQTTSPLDL) are disordered. Residues 233-330 (KVLMQGTIHW…WVAALKTSID (98 aa)) enclose the PH 2 domain.

As to quaternary structure, interacts (via domain PH 1) with phosphatidylinositol 4-phosphate 5-kinase its3; the interaction is direct but opy1 does not appear to regulate its3 localization or function.

The protein resides in the cell tip. The protein localises to the cell membrane. Functionally, binds phosphatidylinositol 4,5-bisphosphate (PtdIns(4,5)P2/PIP2) at the cell membrane. The chain is Pleckstrin homology domain protein opy1 from Schizosaccharomyces pombe (strain 972 / ATCC 24843) (Fission yeast).